Here is a 216-residue protein sequence, read N- to C-terminus: Adenylate kinase (216 aa).

ATP is bound at residue 10-15 (GAGKGT). Positions 30 to 59 (STGDMFRAAMKAETEMGLQAKSFIDKGALV) are NMP. AMP-binding positions include threonine 31, arginine 36, 57–59 (ALV), 85–88 (GFPR), and glutamine 92. An LID region spans residues 126-163 (GRRICKECGATYHLEFNPPAKADVCDKCGGELYQRSDD). Position 127 (arginine 127) interacts with ATP. 2 residues coordinate Zn(2+): cysteine 130 and cysteine 133. Residue 136–137 (TY) coordinates ATP. The Zn(2+) site is built by cysteine 150 and cysteine 153. The AMP site is built by arginine 160 and arginine 171. Position 199 (glutamine 199) interacts with ATP.

Belongs to the adenylate kinase family. Monomer.

The protein resides in the cytoplasm. It carries out the reaction AMP + ATP = 2 ADP. Its pathway is purine metabolism; AMP biosynthesis via salvage pathway; AMP from ADP: step 1/1. In terms of biological role, catalyzes the reversible transfer of the terminal phosphate group between ATP and AMP. Plays an important role in cellular energy homeostasis and in adenine nucleotide metabolism. This chain is Adenylate kinase, found in Bacillus cereus (strain ATCC 10987 / NRS 248).